Consider the following 1127-residue polypeptide: Cellulose synthase-like protein D1 (1127 aa).

The tract at residues 1–24 (MASKGILKNGGKPPTAPSSAAPTV) is disordered. 2 helical membrane-spanning segments follow: residues 262 to 282 (VISPYRLLVLIRLVALGLFLM) and 292 to 312 (AIWLWGMSIVCELWFALSWVL). Catalysis depends on residues D392 and D828. 6 helical membrane passes run 910 to 930 (VFLIVYCFLPALSLFSGQFIV), 936 to 956 (TFLTYLLIITITLCLLAMLEI), 982 to 1002 (LAAVLQGLLKVIAGIEISFTL), 1025 to 1045 (SLMIPPLTIIMINLVAIAVGF), 1059 to 1079 (LLGGVFFSFWVLAHLYPFAKG), and 1089 to 1109 (TIVYVWSGLVAITISLLWIAI).

Belongs to the glycosyltransferase 2 family. Plant cellulose synthase-like D subfamily.

It is found in the golgi apparatus membrane. Its function is as follows. Thought to be a Golgi-localized beta-glycan synthase that polymerize the backbones of noncellulosic polysaccharides (hemicelluloses) of plant cell wall. The protein is Cellulose synthase-like protein D1 (CSLD1) of Oryza sativa subsp. indica (Rice).